We begin with the raw amino-acid sequence, 307 residues long: Ornithine carbamoyltransferase (307 aa).

Residues 56 to 59 (STRT), Gln-83, Arg-107, and 134 to 137 (HPCQ) each bind carbamoyl phosphate. Residues Asn-165, Asp-223, and 227–228 (SM) each bind L-ornithine. Carbamoyl phosphate is bound by residues 263–264 (CL) and Arg-291.

It belongs to the aspartate/ornithine carbamoyltransferase superfamily. OTCase family.

Its subcellular location is the cytoplasm. The catalysed reaction is carbamoyl phosphate + L-ornithine = L-citrulline + phosphate + H(+). Its pathway is amino-acid biosynthesis; L-arginine biosynthesis; L-arginine from L-ornithine and carbamoyl phosphate: step 1/3. Its function is as follows. Reversibly catalyzes the transfer of the carbamoyl group from carbamoyl phosphate (CP) to the N(epsilon) atom of ornithine (ORN) to produce L-citrulline. This is Ornithine carbamoyltransferase from Cupriavidus pinatubonensis (strain JMP 134 / LMG 1197) (Cupriavidus necator (strain JMP 134)).